A 1183-amino-acid chain; its full sequence is Peroxisomal ATPase PEX6 (1183 aa).

Residues Glu161–Val205 form a disordered region. Residues Gly183–Asn204 show a composition bias toward acidic residues. The segment at Leu576–Glu785 is AAA-cassette D1. The tract at residues Gly878–Thr1070 is AAA-cassette D2. Position 883-890 (Gly883–Thr890) interacts with ATP. The interval Ile1160–Tyr1183 is disordered. Over residues Phe1173–Tyr1183 the composition is skewed to acidic residues.

It belongs to the AAA ATPase family. In terms of assembly, interacts with PEX1; forming the PEX1-PEX6 AAA ATPase complex, which is composed of a heterohexamer formed by a trimer of PEX1-PEX6 dimers.

It localises to the cytoplasm. It is found in the cytosol. Its subcellular location is the peroxisome membrane. The catalysed reaction is ATP + H2O = ADP + phosphate + H(+). Functionally, component of the PEX1-PEX6 AAA ATPase complex, a protein dislocase complex that mediates the ATP-dependent extraction of the PEX5 receptor from peroxisomal membranes, an essential step for PEX5 recycling. Specifically recognizes PEX5 monoubiquitinated at 'Cys-6', and pulls it out of the peroxisome lumen through the PEX2-PEX10-PEX12 retrotranslocation channel. Extraction by the PEX1-PEX6 AAA ATPase complex is accompanied by unfolding of the TPR repeats and release of bound cargo from PEX5. Regulates autophagy and biogenesis of peroxisomes and Woronin bodies. Plays important roles in mycelial growth and development and stress response. Is also essential for conidiation and fatty acid utilization. Required for nematode predation via trap formation. The chain is Peroxisomal ATPase PEX6 from Arthrobotrys oligospora (strain ATCC 24927 / CBS 115.81 / DSM 1491) (Nematode-trapping fungus).